Here is a 376-residue protein sequence, read N- to C-terminus: Alpha-ketoglutarate-dependent dioxygenase esdpJ (376 aa).

Fe cation is bound by residues His-145 and Asp-147. Position 202 (Thr-202) interacts with 2-oxoglutarate. A disordered region spans residues 234 to 260 (YNQSSQEKKSEIHVEPRGSPNNVGSDL). A compositionally biased stretch (basic and acidic residues) spans 239-249 (QEKKSEIHVEP). His-335 serves as a coordination point for Fe cation. Positions 347 and 351 each coordinate 2-oxoglutarate. The interval 354–376 (GVGEQPYLDPESKTRREALGEFN) is disordered. The span at 363–376 (PESKTRREALGEFN) shows a compositional bias: basic and acidic residues.

The protein belongs to the TfdA dioxygenase family. Requires Fe(2+) as cofactor.

In terms of biological role, alpha-ketoglutarate-dependent dioxygenas; part of the cluster that mediates the biosynthesis of shearones, diterpenoid pyrones (DPs) which are structurally diverse meroterpenoids consisting of a diterpene linked by a pyrone, and which may exhibit a range of bioactivities. The alpha-ketoglutarate-dependent dioxygenase esdpJ seems not to be involved in this pathway. The molecular scaffold is commonly biosynthesized by a series of enzymes including the non-reducing polyketide synthase (NR-PKS) esdpA that generates an alpha-pyrone; the prenyltransferase esdpC that attaches a geranylgeranyl pyrophosphate (GGPP) produced by the GGPP synthase (GGPPS) esdpD onto the pyrone unit; the FAD-dependent monooxygenase esdpE that converts an olefin on the diterpene unit into an epoxide; and the terpene cyclase esdpB that catalyzes the cyclization reactions to give the molecular backbone shearone A. In the modification steps, esdpF oxidizes the hydroxy group to a ketone at C-3 and esdpG then attaches hydroxy groups at both C-11 and C-12. After that, esdpI hydroxylates at C-20 and esdpH hydroxylates at C-6'. The ether bridge is generated by nucleophilic attack of the hydroxy group at C-20 to the carbonyl carbon at C-3. EsdpH can also functions prior to esdpI. The different combinations of these modification enzymes lead to the production of diverse shearone derivatives, shearone I being the end product of the pathway. This Penicillium shearii (Eupenicillium shearii) protein is Alpha-ketoglutarate-dependent dioxygenase esdpJ.